The primary structure comprises 118 residues: Large ribosomal subunit protein bL20 (118 aa).

Belongs to the bacterial ribosomal protein bL20 family.

Its function is as follows. Binds directly to 23S ribosomal RNA and is necessary for the in vitro assembly process of the 50S ribosomal subunit. It is not involved in the protein synthesizing functions of that subunit. The protein is Large ribosomal subunit protein bL20 of Sodalis glossinidius (strain morsitans).